The chain runs to 1215 residues: Metabotropic glycine receptor (1215 aa).

The signal sequence occupies residues 1-23 (MGAMAYPLLLCLLLAQLGLGAVG). A disordered region spans residues 23–66 (GASRDPQGRPDSPRERTPKGKPHAQQPGRASASDSSAPWSRSTD). The Extracellular segment spans residues 24 to 417 (ASRDPQGRPD…CFVQEDKYLR (394 aa)). Residues 28 to 40 (PQGRPDSPRERTP) are compositionally biased toward basic and acidic residues. The span at 52–64 (ASASDSSAPWSRS) shows a compositional bias: low complexity. The tract at residues 85-281 (YLYTGDSHQL…CENGSYKPGW (197 aa)) is cache-like region. N-linked (GlcNAc...) asparagine glycosylation is found at Asn98 and Asn143. A disulfide bridge connects residues Cys99 and Cys272. 2 residues coordinate glycine: Ser172 and Arg173. Residue Asn215 is glycosylated (N-linked (GlcNAc...) asparagine). Glu271 is a binding site for glycine. Residue Asn274 is glycosylated (N-linked (GlcNAc...) asparagine). Asp307 lines the glycine pocket. Asn333 is a glycosylation site (N-linked (GlcNAc...) asparagine). A helical transmembrane segment spans residues 418–439 (LAIISFQALCMLLDFVSMLVVY). The Cytoplasmic portion of the chain corresponds to 440–451 (HFRKAKSIRASG). A helical membrane pass occupies residues 452-474 (LILLETILFGSLLLYFPVVILYF). Residues 475-478 (EPST) lie on the Extracellular side of the membrane. The chain crosses the membrane as a helical span at residues 479–501 (FRCILLRWARLLGFATVYGTVTL). Cysteines 481 and 573 form a disulfide. Residues 502–525 (KLHRVLKVFLSRTAQRIPYMTGGR) are Cytoplasmic-facing. Residues 526 to 547 (VMRMLAVILLVVFWFLIGWTSS) form a helical membrane-spanning segment. The Extracellular portion of the chain corresponds to 548 to 576 (VCQNLEKQISLIGQGKTSDHLIFNMCLID). A helical transmembrane segment spans residues 577 to 597 (RWDYMTAVAEFLFLLWGVYLC). The Cytoplasmic segment spans residues 598-611 (YAVRTVPSAFHEPR). A helical membrane pass occupies residues 612–633 (YMAVAVHNELIISAIFHTIRFV). Over 634-642 (LASRLQSDW) the chain is Extracellular. The chain crosses the membrane as a helical span at residues 643–664 (MLMLYFAHTHLTVTVTIGLLLI). Residues 665–1215 (PKFSHSSNNP…KEEIWDSFKV (551 aa)) are Cytoplasmic-facing. Residues Ser694, Ser705, and Ser708 each carry the phosphoserine modification. The interval 757 to 999 (RITEIPETVS…LNPGTTQMKD (243 aa)) is disordered. Composition is skewed to basic and acidic residues over residues 769 to 781 (CSKE…DHGT) and 819 to 828 (STYDHVRDQT). Lys774 is covalently cross-linked (Glycyl lysine isopeptide (Lys-Gly) (interchain with G-Cter in ubiquitin)). Ser865 is subject to Phosphoserine. Basic and acidic residues predominate over residues 925–943 (VEERTKSQKPLPKDKETNR). Phosphoserine is present on Ser946. Over residues 979 to 998 (QRVNPTTANSDLNPGTTQMK) the composition is skewed to polar residues. 2 consecutive short sequence motifs (VCPWE motif) follow at residues 1006–1010 (VCPWE) and 1071–1075 (VCLWE). Ser1080 carries the phosphoserine modification. The segment at 1117-1164 (SEELPPKAVASKTENENLNQIGHQEKKTSSSEENVRGSYNSSNNFQQP) is disordered. The span at 1139–1151 (HQEKKTSSSEENV) shows a compositional bias: basic and acidic residues. Polar residues predominate over residues 1153–1164 (GSYNSSNNFQQP). Residues 1171–1175 (VCPWE) carry the VCPWE motif 3 motif.

It belongs to the G-protein coupled receptor 3 family. In terms of assembly, homodimer. Associates with the RGS7-GNB5 complex, promoting its localization to the cell membrane and regulating its GTPase activator activity. Interacts (via VCPWE motifs) with GNAO1. Interacts with GPC4. Interacts with EGFLAM.

Its subcellular location is the cell membrane. It localises to the postsynaptic cell membrane. The protein localises to the presynaptic cell membrane. It is found in the nucleus. In terms of biological role, metabotropic receptor for glycine that controls synapse formation and function in the brain. Acts as an atypical G-protein coupled receptor that recruits and regulates the RGS7-GNB5 complex instead of activating G proteins. In absence of glycine ligand, promotes the GTPase activator activity of RGS7, increasing the GTPase activity of G protein alpha subunits, thereby driving them into their inactive GDP-bound form. Glycine-binding changes the conformation of the intracellular surface, inhibiting the GTPase activator activity of the RGS7-GNB5 complex, promoting G protein alpha subunits into their active GTP-bound form and regulating cAMP levels. Also able to bind taurine, a compound closely related to glycine, but with a two-fold lower affinity. Glycine receptor-dependent regulation of cAMP controls key ion channels, kinases and neurotrophic factors involved in neuronal excitability and synaptic transmission. Plays a pivotal role in regulating mood and cognition via its ability to regulate neuronal excitability in L2/L3 pyramidal neurons of the prefrontal cortex. Also involved in spatial learning by regulating hippocampal CA1 neuronal excitability. Acts as a synaptic organizer in the hippocampus, required for proper mossy fiber-CA3 neurocircuitry establishment, structure and function: induces presynaptic differentiation in contacting axons via its interaction with GPC4. In addition to glycine, may also act as a receptor for osteocalcin (BGLAP) hormone: osteocalcin-binding initiates a signaling response that prevents neuronal apoptosis in the hippocampus and regulates the synthesis of neurotransmitters. This chain is Metabotropic glycine receptor, found in Homo sapiens (Human).